Here is an 838-residue protein sequence, read N- to C-terminus: E3 ubiquitin-protein ligase RNF19A (838 aa).

Residues 128 to 351 (DFIECPLCLL…LSPSGCTFWG (224 aa)) form a TRIAD supradomain region. Residues Cys-132, Cys-135, Cys-150, His-152, Cys-155, Cys-158, Cys-176, Cys-179, Cys-219, Cys-224, Cys-241, Cys-246, Cys-251, Cys-254, His-259, Cys-264, Cys-301, and Cys-304 each contribute to the Zn(2+) site. An RING-type 1 zinc finger spans residues 132-179 (CPLCLLRHSKDRFPEIMTCHHRSCVDCLRQYLRIEISESRVNISCPEC). The IBR-type zinc finger occupies 199–264 (EKYEEFMLRR…KQIWHPNQTC (66 aa)). An RING-type 2; atypical zinc finger spans residues 301–332 (CPRCAAYIIKMNDGSCNHMTCAVCGCEFCWLC). Cys-316 is a catalytic residue. Zn(2+)-binding residues include Cys-321, Cys-324, Cys-329, Cys-332, His-340, and Cys-347. 2 helical membrane-spanning segments follow: residues 368-388 (LVGA…AMII) and 424-444 (VIVS…IMLA). Disordered stretches follow at residues 622–685 (SKPS…SNMK) and 700–721 (QQST…PSVA). A Phosphoserine modification is found at Ser-631. The segment covering 631-644 (SGSSSVDDGSAARS) has biased composition (low complexity). The tract at residues 660 to 838 (ATKWSKEATA…ELKVAIQTDI (179 aa)) is interaction with CASR. The span at 671-683 (KKSKSGKLRKKSN) shows a compositional bias: basic residues. Polar residues predominate over residues 700 to 717 (QQSTNSSEFEAPSLSDSM).

This sequence belongs to the RBR family. RNF19 subfamily. In terms of assembly, interacts with UBE2L3 and UBE2L6. Also interacts with transcription factor Sp1. Interacts with SNCAIP, CASR and VCP.

It is found in the membrane. Its subcellular location is the cytoplasm. It localises to the cytoskeleton. The protein resides in the microtubule organizing center. The protein localises to the centrosome. The catalysed reaction is [E2 ubiquitin-conjugating enzyme]-S-ubiquitinyl-L-cysteine + [acceptor protein]-L-lysine = [E2 ubiquitin-conjugating enzyme]-L-cysteine + [acceptor protein]-N(6)-ubiquitinyl-L-lysine.. Its pathway is protein modification; protein ubiquitination. Functionally, E3 ubiquitin-protein ligase which accepts ubiquitin from E2 ubiquitin-conjugating enzymes UBE2L3 and UBE2L6 in the form of a thioester and then directly transfers the ubiquitin to targeted substrates, such as SNCAIP or CASR. In Sus scrofa (Pig), this protein is E3 ubiquitin-protein ligase RNF19A (RNF19A).